The sequence spans 404 residues: Cysteine desulfurase IscS (404 aa).

Pyridoxal 5'-phosphate contacts are provided by residues Ala-73 to Thr-74, Asn-153, Gln-181, and Ser-201 to His-203. N6-(pyridoxal phosphate)lysine is present on Lys-204. Pyridoxal 5'-phosphate is bound at residue Thr-241. The active-site Cysteine persulfide intermediate is Cys-327. Residue Cys-327 coordinates [2Fe-2S] cluster.

Belongs to the class-V pyridoxal-phosphate-dependent aminotransferase family. NifS/IscS subfamily. Homodimer. Forms a heterotetramer with IscU, interacts with other sulfur acceptors. Pyridoxal 5'-phosphate serves as cofactor.

The protein localises to the cytoplasm. It catalyses the reaction (sulfur carrier)-H + L-cysteine = (sulfur carrier)-SH + L-alanine. It participates in cofactor biosynthesis; iron-sulfur cluster biosynthesis. Its function is as follows. Master enzyme that delivers sulfur to a number of partners involved in Fe-S cluster assembly, tRNA modification or cofactor biosynthesis. Catalyzes the removal of elemental sulfur atoms from cysteine to produce alanine. Functions as a sulfur delivery protein for Fe-S cluster synthesis onto IscU, an Fe-S scaffold assembly protein, as well as other S acceptor proteins. The sequence is that of Cysteine desulfurase IscS from Anaeromyxobacter sp. (strain K).